We begin with the raw amino-acid sequence, 354 residues long: Uroporphyrinogen decarboxylase (354 aa).

Residues 27 to 31, Asp77, Tyr154, Ser209, and His327 contribute to the substrate site; that span reads RQAGR.

This sequence belongs to the uroporphyrinogen decarboxylase family. As to quaternary structure, homodimer.

Its subcellular location is the cytoplasm. It catalyses the reaction uroporphyrinogen III + 4 H(+) = coproporphyrinogen III + 4 CO2. It functions in the pathway porphyrin-containing compound metabolism; protoporphyrin-IX biosynthesis; coproporphyrinogen-III from 5-aminolevulinate: step 4/4. Its function is as follows. Catalyzes the decarboxylation of four acetate groups of uroporphyrinogen-III to yield coproporphyrinogen-III. This Methylobacillus flagellatus (strain ATCC 51484 / DSM 6875 / VKM B-1610 / KT) protein is Uroporphyrinogen decarboxylase.